The chain runs to 188 residues: Adenine phosphoribosyltransferase (188 aa).

Belongs to the purine/pyrimidine phosphoribosyltransferase family. As to quaternary structure, homodimer.

The protein resides in the cytoplasm. It carries out the reaction AMP + diphosphate = 5-phospho-alpha-D-ribose 1-diphosphate + adenine. Its pathway is purine metabolism; AMP biosynthesis via salvage pathway; AMP from adenine: step 1/1. In terms of biological role, catalyzes a salvage reaction resulting in the formation of AMP, that is energically less costly than de novo synthesis. The chain is Adenine phosphoribosyltransferase from Paraburkholderia phytofirmans (strain DSM 17436 / LMG 22146 / PsJN) (Burkholderia phytofirmans).